The sequence spans 553 residues: Arginine--tRNA ligase (553 aa).

The short motif at 130–140 is the 'HIGH' region element; the sequence is ANPTGDLHIGH.

This sequence belongs to the class-I aminoacyl-tRNA synthetase family. Monomer.

The protein localises to the cytoplasm. The enzyme catalyses tRNA(Arg) + L-arginine + ATP = L-arginyl-tRNA(Arg) + AMP + diphosphate. The sequence is that of Arginine--tRNA ligase from Staphylococcus epidermidis (strain ATCC 35984 / DSM 28319 / BCRC 17069 / CCUG 31568 / BM 3577 / RP62A).